A 282-amino-acid chain; its full sequence is Putative 4-diphosphocytidyl-2-C-methyl-D-erythritol kinase (282 aa).

The active site involves lysine 9. 93 to 103 lines the ATP pocket; that stretch reads PVSAGLAGGSA. The active site involves aspartate 135.

Belongs to the GHMP kinase family. IspE subfamily.

It carries out the reaction 4-CDP-2-C-methyl-D-erythritol + ATP = 4-CDP-2-C-methyl-D-erythritol 2-phosphate + ADP + H(+). Functionally, catalyzes the phosphorylation of the position 2 hydroxy group of 4-diphosphocytidyl-2C-methyl-D-erythritol. The sequence is that of Putative 4-diphosphocytidyl-2-C-methyl-D-erythritol kinase from Staphylococcus haemolyticus (strain JCSC1435).